We begin with the raw amino-acid sequence, 584 residues long: Membrane protein insertase YidC (584 aa).

5 helical membrane passes run 5-25 (SVIGLVLISLIMIVWMQFMAP), 358-378 (FIGNYGLIIIIFAFLIKLVTY), 428-448 (LGGCLPVVLQMPLLFAMFYVF), 478-498 (IPLYGDHIALFPILMAVAVFL), and 516-536 (IYIFPVMMLLFFNNMPAGLGL). Positions 563 to 584 (ALSPVVAAPPKAPKKKKNARKR) are disordered. Residues 574–584 (APKKKKNARKR) are compositionally biased toward basic residues.

This sequence belongs to the OXA1/ALB3/YidC family. Type 1 subfamily. Interacts with the Sec translocase complex via SecD. Specifically interacts with transmembrane segments of nascent integral membrane proteins during membrane integration.

Its subcellular location is the cell inner membrane. Required for the insertion and/or proper folding and/or complex formation of integral membrane proteins into the membrane. Involved in integration of membrane proteins that insert both dependently and independently of the Sec translocase complex, as well as at least some lipoproteins. Aids folding of multispanning membrane proteins. The polypeptide is Membrane protein insertase YidC (Prosthecochloris aestuarii (strain DSM 271 / SK 413)).